A 186-amino-acid polypeptide reads, in one-letter code: Ribosome-recycling factor (186 aa).

It belongs to the RRF family.

The protein resides in the cytoplasm. Responsible for the release of ribosomes from messenger RNA at the termination of protein biosynthesis. May increase the efficiency of translation by recycling ribosomes from one round of translation to another. This chain is Ribosome-recycling factor, found in Wolinella succinogenes (strain ATCC 29543 / DSM 1740 / CCUG 13145 / JCM 31913 / LMG 7466 / NCTC 11488 / FDC 602W) (Vibrio succinogenes).